The following is a 443-amino-acid chain: Chromosomal replication initiator protein DnaA (443 aa).

The interval Met1 to Tyr75 is domain I, interacts with DnaA modulators. Residues Tyr75–Ser105 are domain II. Residues Val106–Ser321 form a domain III, AAA+ region region. 4 residues coordinate ATP: Gly150, Gly152, Lys153, and Thr154. Positions Ser322 to Lys443 are domain IV, binds dsDNA.

Belongs to the DnaA family. Oligomerizes as a right-handed, spiral filament on DNA at oriC.

The protein localises to the cytoplasm. Plays an essential role in the initiation and regulation of chromosomal replication. ATP-DnaA binds to the origin of replication (oriC) to initiate formation of the DNA replication initiation complex once per cell cycle. Binds the DnaA box (a 9 base pair repeat at the origin) and separates the double-stranded (ds)DNA. Forms a right-handed helical filament on oriC DNA; dsDNA binds to the exterior of the filament while single-stranded (ss)DNA is stabiized in the filament's interior. The ATP-DnaA-oriC complex binds and stabilizes one strand of the AT-rich DNA unwinding element (DUE), permitting loading of DNA polymerase. After initiation quickly degrades to an ADP-DnaA complex that is not apt for DNA replication. Binds acidic phospholipids. The sequence is that of Chromosomal replication initiator protein DnaA from Acetivibrio thermocellus (strain ATCC 27405 / DSM 1237 / JCM 9322 / NBRC 103400 / NCIMB 10682 / NRRL B-4536 / VPI 7372) (Clostridium thermocellum).